A 330-amino-acid chain; its full sequence is Diacylglycerol acyltransferase/mycolyltransferase Ag85B (330 aa).

A signal peptide spans 1 to 40 (MTDLSEKVRAWGRRLLVGAAAAVTLPGLIGLAGGAATANA). A substrate-binding site is contributed by 82 to 83 (LR). The fibronectin-binding stretch occupies residues 98-108 (FEWYYQSGLSV). A disulfide bridge connects residues cysteine 127 and cysteine 132. Serine 166 and aspartate 194 together coordinate substrate. Serine 166 (nucleophile) is an active-site residue. The active site involves glutamate 270. Residues 272-275 (FVRS), lysine 279, and 302-304 (HSW) each bind substrate. Histidine 302 is a catalytic residue.

This sequence belongs to the mycobacterial A85 antigen family.

The protein localises to the secreted. It catalyses the reaction 2 alpha,alpha'-trehalose 6-mycolate = alpha,alpha'-trehalose 6,6'-bismycolate + alpha,alpha-trehalose. The catalysed reaction is an acyl-CoA + a 1,2-diacyl-sn-glycerol = a triacyl-sn-glycerol + CoA. Functionally, the antigen 85 proteins (FbpA, FbpB, FbpC) are responsible for the high affinity of mycobacteria for fibronectin, a large adhesive glycoprotein, which facilitates the attachment of M.tuberculosis to murine alveolar macrophages (AMs). They also help to maintain the integrity of the cell wall by catalyzing the transfer of mycolic acids to cell wall arabinogalactan and through the synthesis of alpha,alpha-trehalose dimycolate (TDM, cord factor). They catalyze the transfer of a mycoloyl residue from one molecule of alpha,alpha-trehalose monomycolate (TMM) to another TMM, leading to the formation of TDM. In Mycobacterium avium, this protein is Diacylglycerol acyltransferase/mycolyltransferase Ag85B (fbpB).